Reading from the N-terminus, the 495-residue chain is Ectonucleoside triphosphate diphosphohydrolase 2 (495 aa).

The Cytoplasmic portion of the chain corresponds to 1-4 (MAGK). A helical membrane pass occupies residues 5–25 (LVSLVPPLLLAAAGLTGLLLL). Residues 26–462 (CVPTQDVREP…PGLRKGTHFS (437 aa)) lie on the Extracellular side of the membrane. Asn-64 carries an N-linked (GlcNAc...) asparagine glycan. Cys-75 and Cys-99 are joined by a disulfide. Asn-129 carries N-linked (GlcNAc...) asparagine glycosylation. Residue Glu-165 is the Proton acceptor of the active site. 204–208 (GASTQ) provides a ligand contact to ATP. Disulfide bonds link Cys-242/Cys-284 and Cys-265/Cys-310. Asn-294, Asn-306, and Asn-319 each carry an N-linked (GlcNAc...) asparagine glycan. Disulfide bonds link Cys-323–Cys-328 and Cys-377–Cys-399. N-linked (GlcNAc...) asparagine glycans are attached at residues Asn-378 and Asn-443. A helical membrane pass occupies residues 463-483 (SWVALLLLFTVLILAALVLLL). The Cytoplasmic portion of the chain corresponds to 484-495 (RQVRSAKSPGAL).

This sequence belongs to the GDA1/CD39 NTPase family. The cofactor is Ca(2+). Mg(2+) is required as a cofactor. In terms of tissue distribution, expressed in brain, heart, vas deferens, kidney, skeletal muscle, thymus, lung and spleen. Weak expression in liver.

It is found in the cell membrane. Its function is as follows. In the nervous system, could hydrolyze ATP and other nucleotides to regulate purinergic neurotransmission. Hydrolyzes ADP only to a marginal extent. The polypeptide is Ectonucleoside triphosphate diphosphohydrolase 2 (Entpd2) (Rattus norvegicus (Rat)).